The following is a 152-amino-acid chain: CASP-like protein 5B1 (152 aa).

Residues 1–11 (MKKMIGSPGTM) are Cytoplasmic-facing. The chain crosses the membrane as a helical span at residues 12-32 (SGLILRLGQCATAAASIGVMV). The Extracellular segment spans residues 33–42 (SSYDFSNYTA). Residue Asn39 is glycosylated (N-linked (GlcNAc...) asparagine). The chain crosses the membrane as a helical span at residues 43-63 (FCFLVASMGLQLIWSFGLACL). The Cytoplasmic segment spans residues 64 to 77 (DVYAIRRKSDLRSP). A helical membrane pass occupies residues 78–98 (ILLSLFTVGDWVTALLALAAA). The Extracellular portion of the chain corresponds to 99-131 (CSSAGVTVLFTKDTEFCRQQPALSCDRFQISVG). The helical transmembrane segment at 132–152 (LSFFNWFLAAISSHTMFWILI) threads the bilayer.

This sequence belongs to the Casparian strip membrane proteins (CASP) family. As to quaternary structure, homodimer and heterodimers. In terms of tissue distribution, expressed in leaves, exclusively in hair cells (e.g. differentiated trichomes and immature cells).

It is found in the cell membrane. The polypeptide is CASP-like protein 5B1 (Arabidopsis thaliana (Mouse-ear cress)).